A 498-amino-acid polypeptide reads, in one-letter code: MRINPTTSGPGVSTLEKKNLGRIAQIIGPVLDVAFPPGKMPNIYNALVVKGRDTVGQPINVTCEVQQLLGNNRVRAVAMSATDGLMRGMEVIDTGAPLSVPVGGATLGRIFNVLGEPVDNLGPVDTRTTSPIHRSAPAFIQLDTKLSIFETGIKVVDLLAPYRRGGKIGLFGGAGVGKTVLIMELINNIAKAHGGVSVFGGVGERTREGNDLYMEMKESGVINEQNIAESKVALVYGQMNEPPGARMRVGLTALTMAEYFRDVNEQDVLLFIDNIFRFVQAGSEVSALLGRMPSAVGYQPTLSTEMGSLQERITSTKEGSITSIQAVYVPADDLTDPAPATTFAHLDATTVLSRGLAAKGIYPAVDPLDSTSTMLQPRIVGEEHYETAQRVKQTSQRYKELQDIIAILGLDELSEEDRLTVARARKIERFLSQPFFVAEVFTGSPGKYVGLAETIRGFQLILSGELDGLPEQAFYLVGNIDEATAKAMNLEVESKLKK.

Position 172–179 (172–179 (GGAGVGKT)) interacts with ATP.

It belongs to the ATPase alpha/beta chains family. F-type ATPases have 2 components, CF(1) - the catalytic core - and CF(0) - the membrane proton channel. CF(1) has five subunits: alpha(3), beta(3), gamma(1), delta(1), epsilon(1). CF(0) has four main subunits: a(1), b(1), b'(1) and c(9-12).

The protein resides in the plastid. Its subcellular location is the chloroplast thylakoid membrane. The catalysed reaction is ATP + H2O + 4 H(+)(in) = ADP + phosphate + 5 H(+)(out). Its function is as follows. Produces ATP from ADP in the presence of a proton gradient across the membrane. The catalytic sites are hosted primarily by the beta subunits. The polypeptide is ATP synthase subunit beta, chloroplastic (Magnolia tripetala (Umbrella-tree)).